The primary structure comprises 148 residues: 3-hydroxyacyl-[acyl-carrier-protein] dehydratase FabZ (148 aa).

Residue His48 is part of the active site.

The protein belongs to the thioester dehydratase family. FabZ subfamily.

The protein localises to the cytoplasm. It catalyses the reaction a (3R)-hydroxyacyl-[ACP] = a (2E)-enoyl-[ACP] + H2O. Its function is as follows. Involved in unsaturated fatty acids biosynthesis. Catalyzes the dehydration of short chain beta-hydroxyacyl-ACPs and long chain saturated and unsaturated beta-hydroxyacyl-ACPs. The sequence is that of 3-hydroxyacyl-[acyl-carrier-protein] dehydratase FabZ from Campylobacter fetus subsp. fetus (strain 82-40).